A 422-amino-acid chain; its full sequence is Glucose-1-phosphate adenylyltransferase (422 aa).

Alpha-D-glucose 1-phosphate is bound by residues Y109, G175, 190 to 191 (EK), and S208.

This sequence belongs to the bacterial/plant glucose-1-phosphate adenylyltransferase family. Homotetramer.

It catalyses the reaction alpha-D-glucose 1-phosphate + ATP + H(+) = ADP-alpha-D-glucose + diphosphate. The protein operates within glycan biosynthesis; glycogen biosynthesis. Its function is as follows. Involved in the biosynthesis of ADP-glucose, a building block required for the elongation reactions to produce glycogen. Catalyzes the reaction between ATP and alpha-D-glucose 1-phosphate (G1P) to produce pyrophosphate and ADP-Glc. The polypeptide is Glucose-1-phosphate adenylyltransferase (Shewanella amazonensis (strain ATCC BAA-1098 / SB2B)).